A 635-amino-acid polypeptide reads, in one-letter code: Threonine--tRNA ligase (635 aa).

The TGS domain maps to 1-61 (MIQITLPDSS…SQDSALSIVT (61 aa)). A catalytic region spans residues 242–533 (DHRKLGKELD…LIEEHAGALP (292 aa)). 3 residues coordinate Zn(2+): cysteine 333, histidine 384, and histidine 510.

The protein belongs to the class-II aminoacyl-tRNA synthetase family. As to quaternary structure, homodimer. Zn(2+) serves as cofactor.

It is found in the cytoplasm. It catalyses the reaction tRNA(Thr) + L-threonine + ATP = L-threonyl-tRNA(Thr) + AMP + diphosphate + H(+). In terms of biological role, catalyzes the attachment of threonine to tRNA(Thr) in a two-step reaction: L-threonine is first activated by ATP to form Thr-AMP and then transferred to the acceptor end of tRNA(Thr). Also edits incorrectly charged L-seryl-tRNA(Thr). This is Threonine--tRNA ligase from Polaromonas naphthalenivorans (strain CJ2).